A 272-amino-acid polypeptide reads, in one-letter code: MDLTGSAFVIGASGIGKACALAFARYGVRGIVIADLTLEAASAVAAECKSQATHPHFLAEAVAIDVTKEESVYQAIAYAHQVLGRIDYAVNSAGVGVQLANEIAEASVSEFEKMFKVNVTGTFIVTRALSALMKTQDPVPVDEAVPARGVSRGSIVNVGSASGFVATPGMVQYTAAKHAVVGITKNAALDNAKHGIRVNSVCPSWVDTPMIRKAMDDIPELGEMIQKAVPLGRIALAEEVADAVMFLSSPKASYATGCNMILDGGTTLAAHV.

7 residues coordinate NADP(+): isoleucine 15, aspartate 65, arginine 127, tyrosine 173, lysine 177, valine 206, and threonine 208. Residue tyrosine 173 is the Proton donor of the active site. Residue lysine 177 is the Lowers pKa of active site Tyr of the active site.

Belongs to the short-chain dehydrogenases/reductases (SDR) family.

Functionally, short-chain dehydrogenase; part of the gene cluster that mediates the biosynthesis of sordarial, a salicylic aldehyde structurally related to the phytotoxin pyriculol. The most interesting aspect of this pathway is formation of an aromatic product from the highly reducing polyketide synthase srdA. SrdA synthesizes a reduced polyketide chain from one molecule of acetyl-CoA and five molecules of malonyl-CoA. The polyketide chain is then reductively released as an aldehyde. The oxidoreductases srdC, srdD and srdE then oxidize one of the hydroxy groups to facilitate the intramolecular aldol condensation, followed by dehydration to yield a salicylic aldehyde. This aldehyde can undergo facile reduction by endogenous reductases to yield the alcohol 1-hydroxy-2-hydroxymethyl-3-pent-1,3-dienylbenzene. The flavin-dependent srdI counteract against the propensity of the aldehydes to be reduced under physiological conditions and is responsible for reoxidizing 1-hydroxy-2-hydroxymethyl-3-pent-1,3-dienylbenzene back to the salicylic aldehyde. This salicylic aldehyde is then selectively epoxidized by the cupin-domain-containing oxidoreductase srdB to yield the epoxide, which can be hydrolyzed stereoselectively by the hydrolase srdG to give the final product sordarial. The polypeptide is Short-chain dehydrogenase srdC (Neurospora crassa (strain ATCC 24698 / 74-OR23-1A / CBS 708.71 / DSM 1257 / FGSC 987)).